A 477-amino-acid polypeptide reads, in one-letter code: Glycogen synthase (477 aa).

Residue Lys-15 coordinates ADP-alpha-D-glucose.

It belongs to the glycosyltransferase 1 family. Bacterial/plant glycogen synthase subfamily.

It catalyses the reaction [(1-&gt;4)-alpha-D-glucosyl](n) + ADP-alpha-D-glucose = [(1-&gt;4)-alpha-D-glucosyl](n+1) + ADP + H(+). It participates in glycan biosynthesis; glycogen biosynthesis. Synthesizes alpha-1,4-glucan chains using ADP-glucose. This is Glycogen synthase from Shigella boydii serotype 4 (strain Sb227).